The chain runs to 965 residues: Valine--tRNA ligase (965 aa).

The disordered stretch occupies residues 1–22 (MENTPSHINKTEPSLDKTYSPQ). Positions 56-66 (PNVTGSLHMGH) match the 'HIGH' region motif. Positions 568–572 (KMSKS) match the 'KMSKS' region motif. Lys-571 serves as a coordination point for ATP. Residues 896–965 (LIDKATELDR…IEQQATIAAL (70 aa)) adopt a coiled-coil conformation.

It belongs to the class-I aminoacyl-tRNA synthetase family. ValS type 1 subfamily. Monomer.

The protein localises to the cytoplasm. The catalysed reaction is tRNA(Val) + L-valine + ATP = L-valyl-tRNA(Val) + AMP + diphosphate. Its function is as follows. Catalyzes the attachment of valine to tRNA(Val). As ValRS can inadvertently accommodate and process structurally similar amino acids such as threonine, to avoid such errors, it has a 'posttransfer' editing activity that hydrolyzes mischarged Thr-tRNA(Val) in a tRNA-dependent manner. This chain is Valine--tRNA ligase, found in Yersinia pseudotuberculosis serotype I (strain IP32953).